Consider the following 69-residue polypeptide: Guanine nucleotide-binding protein G(I)/G(S)/G(O) subunit gamma-T2 (69 aa).

The disordered stretch occupies residues 47–69 (DPLLKGIPEDKNPFKEKGGCMIS). Over residues 53–69 (IPEDKNPFKEKGGCMIS) the composition is skewed to basic and acidic residues. Position 66 is a cysteine methyl ester (Cys-66). A lipid anchor (S-farnesyl cysteine) is attached at Cys-66. The propeptide at 67–69 (MIS) is removed in mature form.

It belongs to the G protein gamma family. G proteins are composed of 3 units, alpha, beta and gamma.

It localises to the cell membrane. Functionally, guanine nucleotide-binding proteins (G proteins) are involved as a modulator or transducer in various transmembrane signaling systems. The beta and gamma chains are required for the GTPase activity, for replacement of GDP by GTP, and for G protein-effector interaction. The polypeptide is Guanine nucleotide-binding protein G(I)/G(S)/G(O) subunit gamma-T2 (GNGT2) (Canis lupus familiaris (Dog)).